Here is a 539-residue protein sequence, read N- to C-terminus: Envelope glycoprotein E (539 aa).

Residues 1–24 (MRPPVRASLGLLVAWAIGACVCAA) form the signal peptide. Over 25-410 (AIETTWKHAS…RPAAPRAARL (386 aa)) the chain is Virion surface. The segment at 66–91 (CGSLRPSWVSLRPPGQVLDTVVDAEC) is interaction with gI. The interval 168–203 (APRRPEPAGGTPPPRDDEEGGTEEPATPAPPPHPHP) is disordered. 3 disulfides stabilise this stretch: cysteine 262/cysteine 288, cysteine 271/cysteine 280, and cysteine 305/cysteine 314. The disordered stretch occupies residues 378–404 (ERSPPRYRPPPVEPTPSAQPTGPRPAA). Residues 411 to 431 (VGVLGAAVGLAVAGLSVWACV) traverse the membrane as a helical segment. At 432 to 539 (TCRRARAWRA…PSSPDPPHRR (108 aa)) the chain is on the intravirion side. An Internalization motif motif is present at residues 452–455 (YIRL). Disordered regions lie at residues 466-497 (SYGDSDDSEYDSDSDRLPGTDPAPKRGSGFQI) and 517-539 (ITFRADDTSRYRDPSSPDPPHRR). The interval 468–480 (GDSDDSEYDSDSD) is acidic. Residues 520–531 (RADDTSRYRDPS) are compositionally biased toward basic and acidic residues.

This sequence belongs to the alphaherpesvirinae glycoprotein E family. Interacts with gI. Post-translationally, phosphorylated on serines within the acidic cluster. Phosphorylation determines whether endocytosed viral gE traffics to the trans-Golgi network or recycles to the cell membrane.

Its subcellular location is the virion membrane. The protein resides in the host cell membrane. The protein localises to the host cell junction. It localises to the host Golgi apparatus membrane. It is found in the host endosome membrane. In epithelial cells, the heterodimer gE/gI is required for the cell-to-cell spread of the virus, by sorting nascent virions to cell junctions. Once the virus reaches the cell junctions, virus particles can spread to adjacent cells extremely rapidly through interactions with cellular receptors that accumulate at these junctions. Implicated in basolateral spread in polarized cells. In neuronal cells, gE/gI is essential for the anterograde spread of the infection throughout the host nervous system. Together with US9, the heterodimer gE/gI is involved in the sorting and transport of viral structural components toward axon tips. This chain is Envelope glycoprotein E (gE), found in Macaca fascicularis (Crab-eating macaque).